Reading from the N-terminus, the 494-residue chain is Alpha-amylase (494 aa).

Residues 1-26 (MQISKAALLASLAALVYAQPVTLFKR) form the signal peptide. Cys-57 and Cys-65 are joined by a disulfide. Trp-110 contributes to the substrate binding site. Asn-148 provides a ligand contact to Ca(2+). Substrate is bound at residue His-149. Cys-177 and Cys-191 are disulfide-bonded. Ca(2+) is bound at residue Asp-202. N-linked (GlcNAc...) asparagine glycosylation occurs at Asn-224. Arg-231 serves as a coordination point for substrate. Ca(2+)-binding residues include Asp-233, His-237, and Glu-257. The active-site Nucleophile is Asp-233. Position 236 to 237 (236 to 237 (KH)) interacts with substrate. Residue Glu-257 is the Proton donor of the active site. Gly-261 is a substrate binding site. Cys-267 and Cys-310 form a disulfide bridge. Substrate is bound by residues Asp-324 and Arg-371. Residues Cys-462 and Cys-493 are joined by a disulfide bond.

This sequence belongs to the glycosyl hydrolase 13 family. The cofactor is Ca(2+).

The protein localises to the secreted. The enzyme catalyses Endohydrolysis of (1-&gt;4)-alpha-D-glucosidic linkages in polysaccharides containing three or more (1-&gt;4)-alpha-linked D-glucose units.. In Saccharomycopsis fibuligera (Yeast), this protein is Alpha-amylase (ALP1).